The primary structure comprises 264 residues: S-adenosylmethionine decarboxylase proenzyme (264 aa).

Serine 112 functions as the Schiff-base intermediate with substrate; via pyruvic acid in the catalytic mechanism. At serine 112 the chain carries Pyruvic acid (Ser); by autocatalysis. Catalysis depends on histidine 117, which acts as the Proton acceptor; for processing activity. The active-site Proton donor; for catalytic activity is the cysteine 140.

The protein belongs to the prokaryotic AdoMetDC family. Type 2 subfamily. Heterooctamer of four alpha and four beta chains arranged as a tetramer of alpha/beta heterodimers. Pyruvate is required as a cofactor. Is synthesized initially as an inactive proenzyme. Formation of the active enzyme involves a self-maturation process in which the active site pyruvoyl group is generated from an internal serine residue via an autocatalytic post-translational modification. Two non-identical subunits are generated from the proenzyme in this reaction, and the pyruvate is formed at the N-terminus of the alpha chain, which is derived from the carboxyl end of the proenzyme. The post-translation cleavage follows an unusual pathway, termed non-hydrolytic serinolysis, in which the side chain hydroxyl group of the serine supplies its oxygen atom to form the C-terminus of the beta chain, while the remainder of the serine residue undergoes an oxidative deamination to produce ammonia and the pyruvoyl group blocking the N-terminus of the alpha chain.

It carries out the reaction S-adenosyl-L-methionine + H(+) = S-adenosyl 3-(methylsulfanyl)propylamine + CO2. It participates in amine and polyamine biosynthesis; S-adenosylmethioninamine biosynthesis; S-adenosylmethioninamine from S-adenosyl-L-methionine: step 1/1. In terms of biological role, catalyzes the decarboxylation of S-adenosylmethionine to S-adenosylmethioninamine (dcAdoMet), the propylamine donor required for the synthesis of the polyamines spermine and spermidine from the diamine putrescine. The protein is S-adenosylmethionine decarboxylase proenzyme of Escherichia coli O127:H6 (strain E2348/69 / EPEC).